The following is an 861-amino-acid chain: Leucine--tRNA ligase (861 aa).

The 'HIGH' region signature appears at 42–52 (PYPSGKLHMGH). The 'KMSKS' region signature appears at 620 to 624 (KMSKS). An ATP-binding site is contributed by K623.

It belongs to the class-I aminoacyl-tRNA synthetase family.

It is found in the cytoplasm. The catalysed reaction is tRNA(Leu) + L-leucine + ATP = L-leucyl-tRNA(Leu) + AMP + diphosphate. The protein is Leucine--tRNA ligase of Marinobacter nauticus (strain ATCC 700491 / DSM 11845 / VT8) (Marinobacter aquaeolei).